Here is a 480-residue protein sequence, read N- to C-terminus: MNDVAIVKEGWLHKRGEYIKTWRPRYFLLKNDGTFIGYKERPQDLEQRESPLNNFSVAQCQLMKTERPRPNTFIIRCLQWTTVIERTFHVETPEEREEWTTAIQTVADGLKRQEEETMDFRSGSPGENSGAEEMEVSLAKPKHRVTMNDFEYLKLLGKGTFGKVILVKEKATGRYYAMKILKKEVIVAKDEVAHTLTENRVLQNSRHPFLTALKYSFQTHDRLCFVMEYANGGELFFHLSRERVFSEDRARFYGAEIVSALDYLHSEKEVVYRDLKLENLMLDKDGHIKITDFGLCKEGIKDGATMKTFCGTPEYLAPEVLEDNDYGRAVDWWGLGVVMYEMMCGRLPFYNQDHEKLFELILMEEIRFPRTLSPEAKSLLSGLLKKDPKQRLGGGSEDAKEIMQHRFFASIVWQDVYEKKLSPPFKPQVTSETDTRYFDEEFTAQMITITPPDQDDSMEGVDSERRPHFPQFSYSASATA.

The PH domain occupies 5-108 (AIVKEGWLHK…WTTAIQTVAD (104 aa)). Lys14 and Lys20 each carry N6-acetyllysine. 14–19 (KRGEYI) provides a ligand contact to 1D-myo-inositol 1,3,4,5-tetrakisphosphate. 1D-myo-inositol 1,3,4,5-tetrakisphosphate is bound by residues 23-25 (RPR) and Asn53. Residues Cys60 and Cys77 are joined by a disulfide bond. Residue Arg86 coordinates 1D-myo-inositol 1,3,4,5-tetrakisphosphate. Ser124 is modified (phosphoserine). Ser129 carries the phosphoserine; alternate modification. O-linked (GlcNAc) serine; alternate glycosylation occurs at Ser129. Residues 150-408 (FEYLKLLGKG…AKEIMQHRFF (259 aa)) form the Protein kinase domain. 156–164 (LGKGTFGKV) contributes to the ATP binding site. Tyr176 is subject to Phosphotyrosine; by TNK2. Residue Lys179 participates in ATP binding. Asp274 functions as the Proton acceptor in the catalytic mechanism. Lys284 is covalently cross-linked (Glycyl lysine isopeptide (Lys-Gly) (interchain with G-Cter in ubiquitin)). Cys296 and Cys310 are disulfide-bonded. An O-linked (GlcNAc) threonine glycan is attached at Thr305. Thr308 carries the post-translational modification Phosphothreonine; by PDPK1. A glycan (O-linked (GlcNAc) threonine) is linked at Thr312. Residues 409 to 480 (ASIVWQDVYE…QFSYSASATA (72 aa)) form the AGC-kinase C-terminal domain. A Phosphothreonine modification is found at Thr448. Thr450 is subject to Phosphothreonine; by MTOR. The interval 450 to 480 (TPPDQDDSMEGVDSERRPHFPQFSYSASATA) is disordered. Ser473 is a glycosylation site (O-linked (GlcNAc) serine; alternate). At Ser473 the chain carries Phosphoserine; by MTOR; alternate. A Phosphotyrosine modification is found at Tyr474. At Ser477 the chain carries Phosphoserine. Thr479 bears the Phosphothreonine mark.

Belongs to the protein kinase superfamily. AGC Ser/Thr protein kinase family. RAC subfamily. As to quaternary structure, interacts (via the C-terminus) with CCDC88A (via its C-terminus) and THEM4 (via its C-terminus). Interacts with AKTIP. Interacts (via PH domain) with MTCP1, TCL1A and TCL1B. Interacts with TRAF6. Interacts with GRB10; the interaction leads to GRB10 phosphorylation thus promoting YWHAE binding. Interacts with RARA; the interaction phosphorylates RARA and represses its transactivation activity. Interacts with MAP3K5 and TNK2. Interacts with BAD, CLK2, PPP2R5B, STK3 and STK4. Interacts (via PH domain) with SIRT1. Interacts with SRPK2 in a phosphorylation-dependent manner. Interacts with RAF1. Interacts with PKN2 (via C-terminal domain); the interaction occurs with the C-terminus cleavage products of PKN2 in apoptotic cells. Interacts with TRIM13; the interaction ubiquitinates AKT1 leading to its proteasomal degradation. Interacts with and phosphorylated by PDPK1. Interacts with BTBD10. Interacts with KCTD20. Interacts with PA2G4. Interacts with PA2G4. Interacts with KIF14; the interaction is detected in the plasma membrane upon INS stimulation and promotes AKT1 phosphorylation. Interacts with FAM83B; activates the PI3K/AKT signaling cascade. Interacts with WDFY2 (via WD repeats 1-3). Forms a complex with WDFY2 and FOXO1. Interacts with FAM168A. Interacts with SYAP1 (via phosphorylated form and BSD domain); this interaction is enhanced in a mTORC2-mediated manner in response to epidermal growth factor (EGF) stimulation and activates AKT1. Interacts with PKHM3. Interacts with FKBP5/FKBP51; promoting interaction between Akt/AKT1 and PHLPP1, thereby enhancing dephosphorylation and subsequent activation of Akt/AKT1. Interacts with TMEM175; leading to formation of the lysoK(GF) complex. In terms of processing, O-GlcNAcylation at Thr-305 and Thr-312 inhibits activating phosphorylation at Thr-308 via disrupting the interaction between AKT1 and PDPK1. O-GlcNAcylation at Ser-473 also probably interferes with phosphorylation at this site. Post-translationally, phosphorylation on Thr-308, Ser-473 and Tyr-474 is required for full activity. Phosphorylation of the activation loop at Thr-308 by PDPK1/PDK1 is a prerequisite for full activation. Phosphorylation by mTORC2 in response to growth factors plays a key role in AKT1 activation: mTORC2 phosphorylates different sites depending on the context, such as Thr-450, Ser-473, Ser-477 or Thr-479, thereby facilitating subsequent phosphorylation of the activation loop by PDPK1/PDK1. Phosphorylation at Ser-473 by mTORC2 promotes ubiquitination and degradation by the proteasome. Also phosphorylated at Ser-477 and Thr-479 by CDK2, facilitating subsequent phosphorylation of the activation loop by PDPK1/PDK1. Activated TNK2 phosphorylates it on Tyr-176 resulting in its binding to the anionic plasma membrane phospholipid PA. This phosphorylated form localizes to the cell membrane, where it is targeted by PDPK1 and PDPK2 for further phosphorylations on Thr-308 and Ser-473 leading to its activation. Phosphorylated at Thr-308 and Ser-473 by IKBKE and TBK1. Ser-473 phosphorylation is enhanced by interaction with AGAP2 isoform 2 (PIKE-A). Ser-473 phosphorylation is enhanced by signaling through activated FLT3. Ser-473 is dephosphorylated by PHLPP. Dephosphorylated at Thr-308 and Ser-473 by PP2A phosphatase. The phosphorylated form of PPP2R5B is required for bridging AKT1 with PP2A phosphatase. Ser-473 is dephosphorylated by CPPED1, leading to termination of signaling. AIM2 acts as an inhibitor of AKT1 by inhibiting phosphorylation Ser-473: AIM2 acts both by inhibiting the activity of PRKDC/DNA-PK kinase and promoting dephosphorylation by PP2A phosphatase. Ubiquitinated; undergoes both 'Lys-48'- and 'Lys-63'-linked polyubiquitination. TRAF6-induced 'Lys-63'-linked AKT1 ubiquitination is critical for phosphorylation and activation. When ubiquitinated, it translocates to the plasma membrane, where it becomes phosphorylated. When fully phosphorylated and translocated into the nucleus, undergoes 'Lys-48'-polyubiquitination catalyzed by TTC3, leading to its degradation by the proteasome. Ubiquitinated via 'Lys-48'-linked polyubiquitination by ZNRF1, leading to its degradation by the proteasome. Also ubiquitinated by TRIM13 leading to its proteasomal degradation. Phosphorylated, undergoes 'Lys-48'-linked polyubiquitination preferentially at Lys-284 catalyzed by MUL1, leading to its proteasomal degradation. In terms of processing, acetylated on Lys-14 and Lys-20 by the histone acetyltransferases EP300 and KAT2B. Acetylation results in reduced phosphorylation and inhibition of activity. Deacetylated at Lys-14 and Lys-20 by SIRT1. SIRT1-mediated deacetylation relieves the inhibition. Post-translationally, cleavage by caspase-3/CASP3. Cleaved at the caspase-3 consensus site Asp-462 during apoptosis, resulting in down-regulation of the AKT signaling pathway and decreased cell survival.

It localises to the cytoplasm. Its subcellular location is the nucleus. The protein resides in the cell membrane. The protein localises to the mitochondrion intermembrane space. It catalyses the reaction L-seryl-[protein] + ATP = O-phospho-L-seryl-[protein] + ADP + H(+). It carries out the reaction L-threonyl-[protein] + ATP = O-phospho-L-threonyl-[protein] + ADP + H(+). Functionally, AKT1 is one of 3 closely related serine/threonine-protein kinases (AKT1, AKT2 and AKT3) called the AKT kinase, and which regulate many processes including metabolism, proliferation, cell survival, growth and angiogenesis. This is mediated through serine and/or threonine phosphorylation of a range of downstream substrates. Over 100 substrate candidates have been reported so far, but for most of them, no isoform specificity has been reported. AKT is responsible of the regulation of glucose uptake by mediating insulin-induced translocation of the SLC2A4/GLUT4 glucose transporter to the cell surface. Phosphorylation of PTPN1 at 'Ser-50' negatively modulates its phosphatase activity preventing dephosphorylation of the insulin receptor and the attenuation of insulin signaling. Phosphorylation of TBC1D4 triggers the binding of this effector to inhibitory 14-3-3 proteins, which is required for insulin-stimulated glucose transport. AKT also regulates the storage of glucose in the form of glycogen by phosphorylating GSK3A at 'Ser-21' and GSK3B at 'Ser-9', resulting in inhibition of its kinase activity. Phosphorylation of GSK3 isoforms by AKT is also thought to be one mechanism by which cell proliferation is driven. AKT also regulates cell survival via the phosphorylation of MAP3K5 (apoptosis signal-related kinase). Phosphorylation of 'Ser-83' decreases MAP3K5 kinase activity stimulated by oxidative stress and thereby prevents apoptosis. AKT mediates insulin-stimulated protein synthesis by phosphorylating TSC2 at 'Ser-939' and 'Thr-1462', thereby activating the mTORC1 signaling pathway, and leading to both phosphorylation of 4E-BP1 and in activation of RPS6KB1. Also regulates the mTORC1 signaling pathway by catalyzing phosphorylation of CASTOR1 and DEPDC5. AKT plays a role as key modulator of the AKT-mTOR signaling pathway controlling the tempo of the process of newborn neurons integration during adult neurogenesis, including correct neuron positioning, dendritic development and synapse formation. Part of a positive feedback loop of mTORC2 signaling by mediating phosphorylation of MAPKAP1/SIN1, promoting mTORC2 activation. AKT is involved in the phosphorylation of members of the FOXO factors (Forkhead family of transcription factors), leading to binding of 14-3-3 proteins and cytoplasmic localization. In particular, FOXO1 is phosphorylated at 'Thr-24', 'Ser-256' and 'Ser-319'. FOXO3 and FOXO4 are phosphorylated on equivalent sites. AKT has an important role in the regulation of NF-kappa-B-dependent gene transcription and positively regulates the activity of CREB1 (cyclic AMP (cAMP)-response element binding protein). The phosphorylation of CREB1 induces the binding of accessory proteins that are necessary for the transcription of pro-survival genes such as BCL2 and MCL1. AKT phosphorylates 'Ser-454' on ATP citrate lyase (ACLY), thereby potentially regulating ACLY activity and fatty acid synthesis. Activates the 3B isoform of cyclic nucleotide phosphodiesterase (PDE3B) via phosphorylation of 'Ser-273', resulting in reduced cyclic AMP levels and inhibition of lipolysis. Phosphorylates PIKFYVE on 'Ser-318', which results in increased PI(3)P-5 activity. The Rho GTPase-activating protein DLC1 is another substrate and its phosphorylation is implicated in the regulation cell proliferation and cell growth. Signals downstream of phosphatidylinositol 3-kinase (PI(3)K) to mediate the effects of various growth factors such as platelet-derived growth factor (PDGF), epidermal growth factor (EGF), insulin and insulin-like growth factor 1 (IGF1). AKT mediates the antiapoptotic effects of IGF1. Essential for the SPATA13-mediated regulation of cell migration and adhesion assembly and disassembly. May be involved in the regulation of the placental development. Phosphorylates STK4/MST1 at 'Thr-120' and 'Thr-387' leading to inhibition of its: kinase activity, nuclear translocation, autophosphorylation and ability to phosphorylate FOXO3. Phosphorylates STK3/MST2 at 'Thr-117' and 'Thr-384' leading to inhibition of its: cleavage, kinase activity, autophosphorylation at Thr-180, binding to RASSF1 and nuclear translocation. Phosphorylates SRPK2 and enhances its kinase activity towards SRSF2 and ACIN1 and promotes its nuclear translocation. Phosphorylates RAF1 at 'Ser-259' and negatively regulates its activity. Phosphorylation of BAD stimulates its pro-apoptotic activity. Phosphorylates KAT6A at 'Thr-369' and this phosphorylation inhibits the interaction of KAT6A with PML and negatively regulates its acetylation activity towards p53/TP53. Phosphorylates palladin (PALLD), modulating cytoskeletal organization and cell motility. Phosphorylates prohibitin (PHB), playing an important role in cell metabolism and proliferation. Phosphorylates CDKN1A, for which phosphorylation at 'Thr-145' induces its release from CDK2 and cytoplasmic relocalization. These recent findings indicate that the AKT1 isoform has a more specific role in cell motility and proliferation. Phosphorylates CLK2 thereby controlling cell survival to ionizing radiation. Phosphorylates PCK1 at 'Ser-90', reducing the binding affinity of PCK1 to oxaloacetate and changing PCK1 into an atypical protein kinase activity using GTP as donor. Also acts as an activator of TMEM175 potassium channel activity in response to growth factors: forms the lysoK(GF) complex together with TMEM175 and acts by promoting TMEM175 channel activation, independently of its protein kinase activity. Acts as a negative regulator of the cGAS-STING pathway by mediating phosphorylation of CGAS during mitosis, leading to its inhibition. Acts as a regulator of mitochondrial calcium uptake by mediating phosphorylation of MICU1 in the mitochondrial intermembrane space, impairing MICU1 maturation. Acts as an inhibitor of tRNA methylation by mediating phosphorylation of the N-terminus of METTL1, thereby inhibiting METTL1 methyltransferase activity. In response to LPAR1 receptor pathway activation, phosphorylates Rabin8/RAB3IP which alters its activity and phosphorylates WDR44 which induces WDR44 binding to Rab11, thereby switching Rab11 vesicular function from preciliary trafficking to endocytic recycling. The polypeptide is RAC-alpha serine/threonine-protein kinase (AKT1) (Bos taurus (Bovine)).